Here is a 760-residue protein sequence, read N- to C-terminus: 5-methyltetrahydropteroyltriglutamate--homocysteine methyltransferase (760 aa).

5-methyltetrahydropteroyltri-L-glutamate is bound by residues 15–18 and Lys-114; that span reads RELK. L-homocysteine-binding positions include 436–438 and Glu-489; that span reads IGS. L-methionine is bound by residues 436–438 and Glu-489; that span reads IGS. Residues 520–521 and Trp-566 contribute to the 5-methyltetrahydropteroyltri-L-glutamate site; that span reads RC. Asp-604 contacts L-homocysteine. Residue Asp-604 participates in L-methionine binding. Glu-610 is a 5-methyltetrahydropteroyltri-L-glutamate binding site. Zn(2+) is bound by residues His-646, Cys-648, and Glu-670. Residue His-699 is the Proton donor of the active site. Cys-731 lines the Zn(2+) pocket.

Belongs to the vitamin-B12 independent methionine synthase family. Requires Zn(2+) as cofactor.

The catalysed reaction is 5-methyltetrahydropteroyltri-L-glutamate + L-homocysteine = tetrahydropteroyltri-L-glutamate + L-methionine. It participates in amino-acid biosynthesis; L-methionine biosynthesis via de novo pathway; L-methionine from L-homocysteine (MetE route): step 1/1. In terms of biological role, catalyzes the transfer of a methyl group from 5-methyltetrahydrofolate to homocysteine resulting in methionine formation. In Shewanella oneidensis (strain ATCC 700550 / JCM 31522 / CIP 106686 / LMG 19005 / NCIMB 14063 / MR-1), this protein is 5-methyltetrahydropteroyltriglutamate--homocysteine methyltransferase.